The sequence spans 269 residues: Embryonic polyadenylate-binding protein 2 (269 aa).

Positions 26 to 54 are disordered; that stretch reads EAQGWGAWGRTEKTSLVPSAGSDKEAEEN. The RRM domain occupies 139–216; that stretch reads RSVYVGNVDY…RVIKVLPKRT (78 aa). The interval 240-269 is disordered; that stretch reads LQGSLQRKPRLRPHGQSRGRGRASPWFSPY. Residues 246–260 are compositionally biased toward basic residues; it reads RKPRLRPHGQSRGRG.

Its subcellular location is the cytoplasm. Functionally, binds the poly(A) tail of mRNA. This is Embryonic polyadenylate-binding protein 2 (Pabpn1l) from Rattus norvegicus (Rat).